Reading from the N-terminus, the 110-residue chain is Heat shock protein Hsp-12.2 (110 aa).

The region spanning 15–110 (DWPLQHNDGV…VLTITASKKA (96 aa)) is the sHSP domain.

It belongs to the small heat shock protein (HSP20) family.

In Caenorhabditis elegans, this protein is Heat shock protein Hsp-12.2 (hsp-12.2).